The chain runs to 408 residues: Putative agmatinase 3 (408 aa).

A signal peptide spans 1–21; that stretch reads MKSVEWFTWGVFLLLSGFGEA. H198, D222, H224, D226, D319, and D321 together coordinate Mn(2+).

The protein belongs to the arginase family. Mn(2+) serves as cofactor.

It carries out the reaction agmatine + H2O = urea + putrescine. The polypeptide is Putative agmatinase 3 (Schizosaccharomyces pombe (strain 972 / ATCC 24843) (Fission yeast)).